Reading from the N-terminus, the 209-residue chain is Potassium-transporting ATPase KdpC subunit (209 aa).

The chain crosses the membrane as a helical span at residues 10–30 (VISLVFLFVLGFLFPTVTSLI).

The protein belongs to the KdpC family. As to quaternary structure, the system is composed of three essential subunits: KdpA, KdpB and KdpC.

The protein localises to the cell membrane. In terms of biological role, part of the high-affinity ATP-driven potassium transport (or Kdp) system, which catalyzes the hydrolysis of ATP coupled with the electrogenic transport of potassium into the cytoplasm. This subunit acts as a catalytic chaperone that increases the ATP-binding affinity of the ATP-hydrolyzing subunit KdpB by the formation of a transient KdpB/KdpC/ATP ternary complex. This is Potassium-transporting ATPase KdpC subunit from Thermoplasma volcanium (strain ATCC 51530 / DSM 4299 / JCM 9571 / NBRC 15438 / GSS1).